Consider the following 888-residue polypeptide: Pyruvate dehydrogenase E1 component (888 aa).

Homodimer. Part of the PDH complex, consisting of multiple copies of pyruvate dehydrogenase (E1), dihydrolipoamide acetyltransferase (E2) and lipoamide dehydrogenase (E3). Thiamine diphosphate serves as cofactor.

The enzyme catalyses N(6)-[(R)-lipoyl]-L-lysyl-[protein] + pyruvate + H(+) = N(6)-[(R)-S(8)-acetyldihydrolipoyl]-L-lysyl-[protein] + CO2. Component of the pyruvate dehydrogenase (PDH) complex, that catalyzes the overall conversion of pyruvate to acetyl-CoA and CO(2). The protein is Pyruvate dehydrogenase E1 component (aceE) of Buchnera aphidicola subsp. Schizaphis graminum (strain Sg).